Consider the following 133-residue polypeptide: Glycine cleavage system H protein (133 aa).

The Lipoyl-binding domain occupies 30 to 112 (TITVGITHHA…YGAGWFFKIK (83 aa)). At Lys-71 the chain carries N6-lipoyllysine.

The protein belongs to the GcvH family. The glycine cleavage system is composed of four proteins: P, T, L and H. (R)-lipoate is required as a cofactor.

Functionally, the glycine cleavage system catalyzes the degradation of glycine. The H protein shuttles the methylamine group of glycine from the P protein to the T protein. This Neisseria gonorrhoeae (strain ATCC 700825 / FA 1090) protein is Glycine cleavage system H protein.